The primary structure comprises 138 residues: Salivary protein 15 Iper-3 (138 aa).

Residues 1–21 form the signal peptide; it reads MESFVAMKVVCITVLFVIVAV. Asn30, Asn42, Asn68, Asn107, and Asn127 each carry an N-linked (GlcNAc...) asparagine glycan. Residues 119-138 are CD4-binding; that stretch reads GPNGQKCANKSQCVGHIPGC.

Belongs to the salp15 family. As to quaternary structure, interacts with host CD4. Interacts with host DC-SIGN (CD209). Interacts with Borrelia outer surface protein C (OspC). As to expression, expressed in salivary glands.

The protein localises to the secreted. In terms of biological role, salivary tick protein that downregulates host immune system by binding to both dendritic cells, and CD4(+) T cells. Specifically binds to the CD4 coreceptor on T cells. This interaction prevents the activation of the Src kinase, Lck, and its downstream substrate Zap-70, and results in deficient activation of PLCgamma1, the repression of calcium fluxes triggered by T-cell antigen receptor (TCR) ligation, and a subsequent reduction in interleukin-2 production. This salivary protein also binds to DC-SIGN (CD209) on dendritic cells (DC) and activates the Raf-1 kinase/MEK signaling pathway that results in down-regulating expression of pro-inflammatory cytokines. Furthermore, it inhibits T cell proliferation induced by DCs. It also inhibits in vitro keratinocyte inflammation induced by Borrelia burgdorferi or by the major outer surface protein (OspC) of Borrelia. In addition, it downregulates chemokines and monocyte chemoattractant protein 1, as well as several antimicrobial peptides such as defensins, cathelicidin, psoriasin, and RNase 7. Apart from its immunomodulatory activities, it is also associated with protection of Borrelia spirochetes from antibody-mediated killing through its binding to OspC. In vivo, tests on different immune disease animal models show promising therapeutic results, e.g., in inhibiting HIV infection, experimental autoimmune encephalomyelitis, transplantation rejection, and asthma. This chain is Salivary protein 15 Iper-3, found in Ixodes persulcatus (Taiga tick).